The chain runs to 122 residues: Movement protein TGB2 (122 aa).

The Cytoplasmic segment spans residues 1-12 (MVKSTVPTRPNK). A helical transmembrane segment spans residues 13-33 (YWPGVVAIGLVSLFIFLSVSN). Topologically, residues 34-76 (QKHSTTSGDNIHKFSNGGTYRDGSKCITYNRNSPLAYNGSSSN) are lumenal. A helical transmembrane segment spans residues 77–97 (NTLFWLCLLGLSMVWIAYCGY). Residues 98–122 (KSLSGQWHSCQHDKNERNFLFECFE) are Cytoplasmic-facing.

The protein belongs to the virgaviridae/benyvirus TGB2 movement protein family. As to quaternary structure, interacts with movement protein TGB3. TGB1-TGB3-TGB2 complex formation is enhanced by ATP hydrolysis.

The protein localises to the host cell junction. It is found in the host plasmodesma. The protein resides in the host endoplasmic reticulum membrane. Its subcellular location is the host cytoplasm. It localises to the host cytoskeleton. Its function is as follows. Participates in the transport of viral genome to neighboring plant cells directly through plasmodesmata, without any budding. TGBp2 and TGBp3 are necessary for intracellular delivery of TGBp1-containing vRNPs to plasmodesmata. Can gate plasmodesmata and increase their size exclusion limit. To a lesser extent than TGB3, induces host actin cytoskeleton network thickening, which probably plays a major role in virus cell-to-cell movement. The chain is Movement protein TGB2 from Peanut clump virus (isolate 87/TGTA2) (PCV).